We begin with the raw amino-acid sequence, 333 residues long: Phosphate acyltransferase (333 aa).

The protein belongs to the PlsX family. As to quaternary structure, homodimer. Probably interacts with PlsY.

Its subcellular location is the cytoplasm. It catalyses the reaction a fatty acyl-[ACP] + phosphate = an acyl phosphate + holo-[ACP]. It functions in the pathway lipid metabolism; phospholipid metabolism. In terms of biological role, catalyzes the reversible formation of acyl-phosphate (acyl-PO(4)) from acyl-[acyl-carrier-protein] (acyl-ACP). This enzyme utilizes acyl-ACP as fatty acyl donor, but not acyl-CoA. This Desulforamulus reducens (strain ATCC BAA-1160 / DSM 100696 / MI-1) (Desulfotomaculum reducens) protein is Phosphate acyltransferase.